Reading from the N-terminus, the 268-residue chain is 4-hydroxy-tetrahydrodipicolinate reductase (268 aa).

NAD(+) contacts are provided by residues 8 to 13 (GAAGRM) and Asp35. Position 36 (Arg36) interacts with NADP(+). NAD(+) is bound by residues 99–101 (GTT) and 123–126 (AANF). The active-site Proton donor/acceptor is His156. His157 contacts (S)-2,3,4,5-tetrahydrodipicolinate. Lys160 serves as the catalytic Proton donor. 166 to 167 (GT) contacts (S)-2,3,4,5-tetrahydrodipicolinate.

This sequence belongs to the DapB family.

Its subcellular location is the cytoplasm. The catalysed reaction is (S)-2,3,4,5-tetrahydrodipicolinate + NAD(+) + H2O = (2S,4S)-4-hydroxy-2,3,4,5-tetrahydrodipicolinate + NADH + H(+). The enzyme catalyses (S)-2,3,4,5-tetrahydrodipicolinate + NADP(+) + H2O = (2S,4S)-4-hydroxy-2,3,4,5-tetrahydrodipicolinate + NADPH + H(+). The protein operates within amino-acid biosynthesis; L-lysine biosynthesis via DAP pathway; (S)-tetrahydrodipicolinate from L-aspartate: step 4/4. Its function is as follows. Catalyzes the conversion of 4-hydroxy-tetrahydrodipicolinate (HTPA) to tetrahydrodipicolinate. The chain is 4-hydroxy-tetrahydrodipicolinate reductase from Pseudomonas aeruginosa (strain LESB58).